The sequence spans 364 residues: DNA polymerase IV (364 aa).

Positions Ile-14–Gly-198 constitute a UmuC domain. Mg(2+) is bound by residues Asp-18 and Asp-116. Glu-117 is an active-site residue.

The protein belongs to the DNA polymerase type-Y family. As to quaternary structure, monomer. Mg(2+) is required as a cofactor.

Its subcellular location is the cytoplasm. It carries out the reaction DNA(n) + a 2'-deoxyribonucleoside 5'-triphosphate = DNA(n+1) + diphosphate. In terms of biological role, poorly processive, error-prone DNA polymerase involved in untargeted mutagenesis. Copies undamaged DNA at stalled replication forks, which arise in vivo from mismatched or misaligned primer ends. These misaligned primers can be extended by PolIV. Exhibits no 3'-5' exonuclease (proofreading) activity. May be involved in translesional synthesis, in conjunction with the beta clamp from PolIII. The protein is DNA polymerase IV of Streptococcus agalactiae serotype Ia (strain ATCC 27591 / A909 / CDC SS700).